A 487-amino-acid polypeptide reads, in one-letter code: UDP-N-acetylmuramate--L-alanine ligase (487 aa).

126 to 132 (GTHGKTT) contacts ATP.

The protein belongs to the MurCDEF family.

It is found in the cytoplasm. It catalyses the reaction UDP-N-acetyl-alpha-D-muramate + L-alanine + ATP = UDP-N-acetyl-alpha-D-muramoyl-L-alanine + ADP + phosphate + H(+). It participates in cell wall biogenesis; peptidoglycan biosynthesis. In terms of biological role, cell wall formation. The polypeptide is UDP-N-acetylmuramate--L-alanine ligase (Psychromonas ingrahamii (strain DSM 17664 / CCUG 51855 / 37)).